A 326-amino-acid chain; its full sequence is Ig gamma-1 chain C region (326 aa).

Residues 1 to 97 (AETTAPSVYP…ASSTKVDKKI (97 aa)) form a CH1 region. A disulfide bond links Cys27 and Cys82. Positions 98 to 112 (VPRNCGGDCKPCICT) are hinge. The CH2 stretch occupies residues 113–219 (GSEVSSVFIF…PIEKTISKPE (107 aa)). 2 disulfides stabilise this stretch: Cys140–Cys200 and Cys246–Cys304. The N-linked (GlcNAc...) asparagine glycan is linked to Asn176. A CH3 region spans residues 220 to 326 (GRTQVPHVYT…EKSLSHSPGK (107 aa)).

The protein is Ig gamma-1 chain C region of Rattus norvegicus (Rat).